The chain runs to 436 residues: Gamma-glutamyl phosphate reductase (436 aa).

Belongs to the gamma-glutamyl phosphate reductase family.

It is found in the cytoplasm. It carries out the reaction L-glutamate 5-semialdehyde + phosphate + NADP(+) = L-glutamyl 5-phosphate + NADPH + H(+). The protein operates within amino-acid biosynthesis; L-proline biosynthesis; L-glutamate 5-semialdehyde from L-glutamate: step 2/2. Catalyzes the NADPH-dependent reduction of L-glutamate 5-phosphate into L-glutamate 5-semialdehyde and phosphate. The product spontaneously undergoes cyclization to form 1-pyrroline-5-carboxylate. The protein is Gamma-glutamyl phosphate reductase of Polaromonas sp. (strain JS666 / ATCC BAA-500).